The primary structure comprises 149 residues: Glutamate mutase sigma subunit (149 aa).

One can recognise a B12-binding domain in the interval 5–138 (DPTVVLGTIG…DAVKTELDVD (134 aa)). Adenosylcob(III)alamin contacts are provided by residues 15-19 (SDAHA), histidine 18, 63-65 (SSL), and 94-98 (NLAVG).

This sequence belongs to the methylaspartate mutase GlmS subunit family. Heterotetramer composed of 2 epsilon subunits (GlmE) and 2 sigma subunits (GlmS). GlmE exists as a homodimer and GlmS as a monomer. Requires adenosylcob(III)alamin as cofactor.

It catalyses the reaction (2S,3S)-3-methyl-L-aspartate = L-glutamate. The protein operates within amino-acid degradation; L-glutamate degradation via mesaconate pathway; acetate and pyruvate from L-glutamate: step 1/4. Functionally, catalyzes the carbon skeleton rearrangement of L-glutamate to L-threo-3-methylaspartate ((2S,3S)-3-methylaspartate). This is Glutamate mutase sigma subunit from Halobacterium salinarum (strain ATCC 700922 / JCM 11081 / NRC-1) (Halobacterium halobium).